The sequence spans 310 residues: ADP-L-glycero-D-manno-heptose-6-epimerase (310 aa).

Residues 10–11 (FI), 31–32 (DN), Lys-38, Lys-53, 75–79 (EGACS), and Asn-92 contribute to the NADP(+) site. The active-site Proton acceptor is the Tyr-140. Lys-144 is an NADP(+) binding site. Asn-169 contributes to the substrate binding site. NADP(+) contacts are provided by Val-170 and Lys-178. Residue Lys-178 is the Proton acceptor of the active site. Residues Ser-180, His-187, 201–204 (FAGS), Arg-209, and Tyr-272 each bind substrate.

This sequence belongs to the NAD(P)-dependent epimerase/dehydratase family. HldD subfamily. In terms of assembly, homopentamer. NADP(+) serves as cofactor.

It carries out the reaction ADP-D-glycero-beta-D-manno-heptose = ADP-L-glycero-beta-D-manno-heptose. It participates in nucleotide-sugar biosynthesis; ADP-L-glycero-beta-D-manno-heptose biosynthesis; ADP-L-glycero-beta-D-manno-heptose from D-glycero-beta-D-manno-heptose 7-phosphate: step 4/4. Catalyzes the interconversion between ADP-D-glycero-beta-D-manno-heptose and ADP-L-glycero-beta-D-manno-heptose via an epimerization at carbon 6 of the heptose. The chain is ADP-L-glycero-D-manno-heptose-6-epimerase from Yersinia pseudotuberculosis serotype O:1b (strain IP 31758).